The chain runs to 366 residues: NADH-quinone oxidoreductase subunit D (366 aa).

It belongs to the complex I 49 kDa subunit family. In terms of assembly, NDH-1 is composed of 14 different subunits. Subunits NuoB, C, D, E, F, and G constitute the peripheral sector of the complex.

Its subcellular location is the cell membrane. The catalysed reaction is a quinone + NADH + 5 H(+)(in) = a quinol + NAD(+) + 4 H(+)(out). Functionally, NDH-1 shuttles electrons from NADH, via FMN and iron-sulfur (Fe-S) centers, to quinones in the respiratory chain. The immediate electron acceptor for the enzyme in this species is believed to be a menaquinone. Couples the redox reaction to proton translocation (for every two electrons transferred, four hydrogen ions are translocated across the cytoplasmic membrane), and thus conserves the redox energy in a proton gradient. This chain is NADH-quinone oxidoreductase subunit D, found in Bacillus thuringiensis (strain Al Hakam).